The following is a 335-amino-acid chain: Pyridoxal 5'-phosphate synthase subunit PdxS (335 aa).

A D-ribose 5-phosphate-binding site is contributed by Asp30. Residue Lys87 is the Schiff-base intermediate with D-ribose 5-phosphate of the active site. Residue Gly159 participates in D-ribose 5-phosphate binding. Position 171 (Arg171) interacts with D-glyceraldehyde 3-phosphate. D-ribose 5-phosphate-binding positions include Gly257 and 278–279; that span reads GS.

Belongs to the PdxS/SNZ family. In terms of assembly, in the presence of PdxT, forms a dodecamer of heterodimers.

It carries out the reaction aldehydo-D-ribose 5-phosphate + D-glyceraldehyde 3-phosphate + L-glutamine = pyridoxal 5'-phosphate + L-glutamate + phosphate + 3 H2O + H(+). It participates in cofactor biosynthesis; pyridoxal 5'-phosphate biosynthesis. Catalyzes the formation of pyridoxal 5'-phosphate from ribose 5-phosphate (RBP), glyceraldehyde 3-phosphate (G3P) and ammonia. The ammonia is provided by the PdxT subunit. Can also use ribulose 5-phosphate and dihydroxyacetone phosphate as substrates, resulting from enzyme-catalyzed isomerization of RBP and G3P, respectively. The polypeptide is Pyridoxal 5'-phosphate synthase subunit PdxS (Pyrococcus furiosus (strain ATCC 43587 / DSM 3638 / JCM 8422 / Vc1)).